The sequence spans 153 residues: MDQETVGNVVLLAIVTLISVIQNGFFAHKVEHESKTQNGRSFQRTGTLAFERVYTANQNCVDAYPTFLVMLWSAGLLCSQVPAAFAGLMYLFVRQKYFVGYLGERRQSTPGYIFGKRIILFLFLMSLAGIFNYYLILFFGSDFENYIKTITTT.

Residues 1–8 lie on the Lumenal side of the membrane; the sequence is MDQETVGN. Residues 9-30 traverse the membrane as a helical segment; the sequence is VVLLAIVTLISVIQNGFFAHKV. The Cytoplasmic portion of the chain corresponds to 31 to 52; the sequence is EHESKTQNGRSFQRTGTLAFER. A helical transmembrane segment spans residues 53–77; it reads VYTANQNCVDAYPTFLVMLWSAGLL. The Lumenal segment spans residues 78–80; that stretch reads CSQ. Residues 81 to 102 form a helical membrane-spanning segment; it reads VPAAFAGLMYLFVRQKYFVGYL. Residues 103–107 lie on the Cytoplasmic side of the membrane; sequence GERRQ. The stretch at 108–115 is an intramembrane region; the sequence is STPGYIFG. The helical transmembrane segment at 116–128 threads the bilayer; that stretch reads KRIILFLFLMSLA. The Lumenal portion of the chain corresponds to 129–153; it reads GIFNYYLILFFGSDFENYIKTITTT.

This sequence belongs to the MAPEG family. Homotrimer. Interacts with LTC4S and ALOX5.

The protein localises to the nucleus membrane. It localises to the endoplasmic reticulum membrane. In terms of biological role, required for leukotriene biosynthesis by ALOX5 (5-lipoxygenase). Anchors ALOX5 to the membrane. Binds arachidonic acid, and could play an essential role in the transfer of arachidonic acid to ALOX5. Binds to MK-886, a compound that blocks the biosynthesis of leukotrienes. This chain is Arachidonate 5-lipoxygenase-activating protein (ALOX5AP), found in Equus caballus (Horse).